The chain runs to 229 residues: 2-C-methyl-D-erythritol 4-phosphate cytidylyltransferase (229 aa).

This sequence belongs to the IspD/TarI cytidylyltransferase family. IspD subfamily.

It carries out the reaction 2-C-methyl-D-erythritol 4-phosphate + CTP + H(+) = 4-CDP-2-C-methyl-D-erythritol + diphosphate. Its pathway is isoprenoid biosynthesis; isopentenyl diphosphate biosynthesis via DXP pathway; isopentenyl diphosphate from 1-deoxy-D-xylulose 5-phosphate: step 2/6. Catalyzes the formation of 4-diphosphocytidyl-2-C-methyl-D-erythritol from CTP and 2-C-methyl-D-erythritol 4-phosphate (MEP). This is 2-C-methyl-D-erythritol 4-phosphate cytidylyltransferase from Clostridium botulinum (strain 657 / Type Ba4).